The sequence spans 276 residues: 3-methyl-2-oxobutanoate hydroxymethyltransferase (276 aa).

Mg(2+) is bound by residues Asp-45 and Asp-84. 3-methyl-2-oxobutanoate-binding positions include 45–46 (DS), Asp-84, and Lys-114. Glu-116 provides a ligand contact to Mg(2+). The active-site Proton acceptor is Glu-183.

This sequence belongs to the PanB family. Homodecamer; pentamer of dimers. It depends on Mg(2+) as a cofactor.

Its subcellular location is the cytoplasm. It catalyses the reaction 3-methyl-2-oxobutanoate + (6R)-5,10-methylene-5,6,7,8-tetrahydrofolate + H2O = 2-dehydropantoate + (6S)-5,6,7,8-tetrahydrofolate. The protein operates within cofactor biosynthesis; (R)-pantothenate biosynthesis; (R)-pantoate from 3-methyl-2-oxobutanoate: step 1/2. Functionally, catalyzes the reversible reaction in which hydroxymethyl group from 5,10-methylenetetrahydrofolate is transferred onto alpha-ketoisovalerate to form ketopantoate. This chain is 3-methyl-2-oxobutanoate hydroxymethyltransferase, found in Syntrophomonas wolfei subsp. wolfei (strain DSM 2245B / Goettingen).